A 150-amino-acid polypeptide reads, in one-letter code: MQIILLEKVANLGNLGDIVKVKDGYARNFLIPNRKARRATKDAIAEFEVRRAELEKVAAEKLAAAQAVGEKLNGQTFEITQKSGVDGRLFGSVTNGDVAELLKKAGYEIEKAQVRMPEGPLKMIGEHGVQVALHTDVVVDVTVNVIGDHA.

Belongs to the bacterial ribosomal protein bL9 family.

Functionally, binds to the 23S rRNA. The sequence is that of Large ribosomal subunit protein bL9 from Burkholderia mallei (strain NCTC 10247).